Reading from the N-terminus, the 590-residue chain is MGFRLITQLKGMSVLLVLFPTLLLVMLTGAQRACPKNCRCDGKIVYCESHAFADIPENISGGSQGLSLRFNSIQKLKSNQFAGLNQLIWLYLDHNYISSVDEDAFQGIRRLKELILSSNKITYLHNKTFHPVPNLRNLDLSYNKLQTLQSEQFKGLRKLIILHLRSNSLKTVPIRVFQDCRNLDFLDLGYNRLRSLSRNAFAGLLKLKELHLEHNQFSKINFAHFPRLFNLRSIYLQWNRIRSVSQGLTWTWSSLHTLDLSGNDIQAIEPGTFKCLPNLQKLNLDSNKLTNVSQETVNAWISLISITLSGNMWECSRSICPLFYWLKNFKGNKESTMICAGPKHIQGEKVSDAVETYNICSDVQVVNTERSHLAPQTPQKPPFFPKPTIFKSDAIPATLEAVSPSPGFQIPGTDHEYEHVSFHKIIAGSVALFLSVAMILLVIYVSWKRYPASMKQLQQHSLMKRRRKKARESERQMNSPLQEYYVDYKPTNSETMDISVNGSGPCTYTISGSRECEMPHHVKPLPYYSYDQPVIGYCQAHQPLHINKAYEAVSIEQDDSPSLELGRDHSFIATIARSAAPAIYLERITN.

The first 30 residues, 1 to 30 (MGFRLITQLKGMSVLLVLFPTLLLVMLTGA), serve as a signal peptide directing secretion. The region spanning 31 to 59 (QRACPKNCRCDGKIVYCESHAFADIPENI) is the LRRNT domain. Topologically, residues 31–424 (QRACPKNCRC…HEYEHVSFHK (394 aa)) are extracellular. Asn-58 carries N-linked (GlcNAc...) asparagine glycosylation. LRR repeat units follow at residues 60 to 83 (SGGSQGLSLRFNSIQKLKSNQFAG), 84 to 107 (LNQLIWLYLDHNYISSVDEDAFQG), 108 to 131 (IRRLKELILSSNKITYLHNKTFHP), 132 to 155 (VPNLRNLDLSYNKLQTLQSEQFKG), 157 to 179 (RKLIILHLRSNSLKTVPIRVFQD), 180 to 203 (CRNLDFLDLGYNRLRSLSRNAFAG), 205 to 227 (LKLKELHLEHNQFSKINFAHFPR), 228 to 251 (LFNLRSIYLQWNRIRSVSQGLTWT), 252 to 275 (WSSLHTLDLSGNDIQAIEPGTFKC), and 276 to 299 (LPNLQKLNLDSNKLTNVSQETVNA). Asn-126 is a glycosylation site (N-linked (GlcNAc...) asparagine). A glycan (N-linked (GlcNAc...) asparagine) is linked at Asn-291. In terms of domain architecture, LRRCT spans 311–362 (NMWECSRSICPLFYWLKNFKGNKESTMICAGPKHIQGEKVSDAVETYNICSD). A helical transmembrane segment spans residues 425–445 (IIAGSVALFLSVAMILLVIYV). Residues 446 to 590 (SWKRYPASMK…PAIYLERITN (145 aa)) lie on the Cytoplasmic side of the membrane.

The protein belongs to the LRRTM family. In terms of assembly, peripherally associated with AMPAR complex. AMPAR complex consists of an inner core made of 4 pore-forming GluA/GRIA proteins (GRIA1, GRIA2, GRIA3 and GRIA4) and 4 major auxiliary subunits arranged in a twofold symmetry. One of the two pairs of distinct binding sites is occupied either by CNIH2, CNIH3 or CACNG2, CACNG3. The other harbors CACNG2, CACNG3, CACNG4, CACNG8 or GSG1L. This inner core of AMPAR complex is complemented by outer core constituents binding directly to the GluA/GRIA proteins at sites distinct from the interaction sites of the inner core constituents. Outer core constituents include at least PRRT1, PRRT2, CKAMP44/SHISA9, FRRS1L and NRN1. The proteins of the inner and outer core serve as a platform for other, more peripherally associated AMPAR constituents, including LRRTM4. Alone or in combination, these auxiliary subunits control the gating and pharmacology of the AMPAR complex and profoundly impact their biogenesis and protein processing. As to expression, expressed in the brain (at protein level).

It is found in the cell membrane. The protein localises to the postsynaptic cell membrane. In terms of biological role, may play a role in the development and maintenance of the nervous system. Exhibits strong synaptogenic activity, restricted to excitatory presynaptic differentiation. The chain is Leucine-rich repeat transmembrane neuronal protein 4 (Lrrtm4) from Rattus norvegicus (Rat).